The chain runs to 236 residues: Biosynthetic peptidoglycan transglycosylase (236 aa).

A helical transmembrane segment spans residues 12–31; it reads ALLWFAAGSVLVVLVLRWVP.

This sequence belongs to the glycosyltransferase 51 family.

The protein localises to the cell inner membrane. The enzyme catalyses [GlcNAc-(1-&gt;4)-Mur2Ac(oyl-L-Ala-gamma-D-Glu-L-Lys-D-Ala-D-Ala)](n)-di-trans,octa-cis-undecaprenyl diphosphate + beta-D-GlcNAc-(1-&gt;4)-Mur2Ac(oyl-L-Ala-gamma-D-Glu-L-Lys-D-Ala-D-Ala)-di-trans,octa-cis-undecaprenyl diphosphate = [GlcNAc-(1-&gt;4)-Mur2Ac(oyl-L-Ala-gamma-D-Glu-L-Lys-D-Ala-D-Ala)](n+1)-di-trans,octa-cis-undecaprenyl diphosphate + di-trans,octa-cis-undecaprenyl diphosphate + H(+). The protein operates within cell wall biogenesis; peptidoglycan biosynthesis. Peptidoglycan polymerase that catalyzes glycan chain elongation from lipid-linked precursors. In Pseudomonas syringae pv. syringae (strain B728a), this protein is Biosynthetic peptidoglycan transglycosylase.